The sequence spans 216 residues: Probable nicotinate-nucleotide adenylyltransferase (216 aa).

This sequence belongs to the NadD family.

It catalyses the reaction nicotinate beta-D-ribonucleotide + ATP + H(+) = deamido-NAD(+) + diphosphate. The protein operates within cofactor biosynthesis; NAD(+) biosynthesis; deamido-NAD(+) from nicotinate D-ribonucleotide: step 1/1. In terms of biological role, catalyzes the reversible adenylation of nicotinate mononucleotide (NaMN) to nicotinic acid adenine dinucleotide (NaAD). This is Probable nicotinate-nucleotide adenylyltransferase from Geotalea uraniireducens (strain Rf4) (Geobacter uraniireducens).